A 439-amino-acid chain; its full sequence is Testican-1 (439 aa).

A signal peptide spans 1-21; it reads MPAIAVLAAAAAAWCFLQVES. Intrachain disulfides connect cysteine 86/cysteine 97, cysteine 91/cysteine 107, cysteine 136/cysteine 166, cysteine 139/cysteine 159, and cysteine 148/cysteine 180. Positions 130-182 constitute a Kazal-like domain; that stretch reads PSNLVKCKPCPVAQSAMVCGSDGHSYTSKCKLEFHACSTGKSLATLCDGPCPC. Threonine 228 carries O-linked (GalNAc...) threonine glycosylation. Residues 310 to 376 form the Thyroglobulin type-1 domain; it reads GLPCQNEMNR…GSRKQGAVSC (67 aa). 3 cysteine pairs are disulfide-bonded: cysteine 313/cysteine 337, cysteine 348/cysteine 355, and cysteine 357/cysteine 376. O-linked (Xyl...) (glycosaminoglycan) serine glycosylation is found at serine 383 and serine 388. Residues 415-439 form a disordered region; sequence VHTRAVTEDDEDEDDDKEDEVGYIW. A compositionally biased stretch (acidic residues) spans 422–439; that stretch reads EDDEDEDDDKEDEVGYIW.

In terms of processing, O-glycosylated. Glycosaminoglycan that contains chondroitin sulfate and heparan sulfate.

The protein resides in the secreted. The protein localises to the extracellular space. It localises to the extracellular matrix. Its function is as follows. May play a role in cell-cell and cell-matrix interactions. May contribute to various neuronal mechanisms in the central nervous system. The sequence is that of Testican-1 (SPOCK1) from Homo sapiens (Human).